Reading from the N-terminus, the 293-residue chain is Xylanase inhibitor protein XIP (293 aa).

The signal sequence occupies residues 1–21; the sequence is MALRRLAALLSLAVLLSAGLA. One can recognise a GH18 domain in the interval 31-293; that stretch reads GDTVIIWGRN…DKKTGFTAHL (263 aa). 2 disulfide bridges follow: Cys-50-Cys-92 and Cys-189-Cys-218.

Belongs to the glycosyl hydrolase 18 family. Xylanase inhibitor subfamily. Expressed in mature grain.

The protein resides in the secreted. In terms of biological role, fungal xylanase inhibitor. Possesses competitive inhibiting activity against several fungal endo-1,4-beta-D-xylanases belonging to glycoside hydrolase family 10 (GH10) and family 11 (GH11). May function in plant defense against secreted fungal pathogen xylanases. Is similar to class III chitinases, but does not exhibit chitinase activity. The chain is Xylanase inhibitor protein XIP from Oryza sativa subsp. japonica (Rice).